Here is a 157-residue protein sequence, read N- to C-terminus: Putative 4-hydroxy-4-methyl-2-oxoglutarate aldolase (157 aa).

Substrate is bound by residues Gly78–Ile81 and Arg100. Asp101 is an a divalent metal cation binding site.

The protein belongs to the class II aldolase/RraA-like family. In terms of assembly, homotrimer. The cofactor is a divalent metal cation.

It carries out the reaction 4-hydroxy-4-methyl-2-oxoglutarate = 2 pyruvate. It catalyses the reaction oxaloacetate + H(+) = pyruvate + CO2. Catalyzes the aldol cleavage of 4-hydroxy-4-methyl-2-oxoglutarate (HMG) into 2 molecules of pyruvate. Also contains a secondary oxaloacetate (OAA) decarboxylase activity due to the common pyruvate enolate transition state formed following C-C bond cleavage in the retro-aldol and decarboxylation reactions. The polypeptide is Putative 4-hydroxy-4-methyl-2-oxoglutarate aldolase (Mycobacterium leprae (strain Br4923)).